The following is a 206-amino-acid chain: Small ribosomal subunit protein uS2 (206 aa).

The protein belongs to the universal ribosomal protein uS2 family.

The chain is Small ribosomal subunit protein uS2 from Methanothrix thermoacetophila (strain DSM 6194 / JCM 14653 / NBRC 101360 / PT) (Methanosaeta thermophila).